Here is a 266-residue protein sequence, read N- to C-terminus: Ribosomal RNA small subunit methyltransferase A (266 aa).

Positions 13, 15, 40, 61, 86, and 110 each coordinate S-adenosyl-L-methionine.

It belongs to the class I-like SAM-binding methyltransferase superfamily. rRNA adenine N(6)-methyltransferase family. RsmA subfamily.

It localises to the cytoplasm. The catalysed reaction is adenosine(1518)/adenosine(1519) in 16S rRNA + 4 S-adenosyl-L-methionine = N(6)-dimethyladenosine(1518)/N(6)-dimethyladenosine(1519) in 16S rRNA + 4 S-adenosyl-L-homocysteine + 4 H(+). Functionally, specifically dimethylates two adjacent adenosines (A1518 and A1519) in the loop of a conserved hairpin near the 3'-end of 16S rRNA in the 30S particle. May play a critical role in biogenesis of 30S subunits. This chain is Ribosomal RNA small subunit methyltransferase A, found in Hydrogenovibrio crunogenus (strain DSM 25203 / XCL-2) (Thiomicrospira crunogena).